A 420-amino-acid polypeptide reads, in one-letter code: Ribulose bisphosphate carboxylase large chain (420 aa).

The substrate site is built by Asn103 and Thr153. Lys155 functions as the Proton acceptor in the catalytic mechanism. A substrate-binding site is contributed by Lys157. Mg(2+) contacts are provided by Lys181, Asp183, and Glu184. Residue Lys181 is modified to N6-carboxylysine. His274 functions as the Proton acceptor in the catalytic mechanism. Residues Arg275, His307, and Ser359 each contribute to the substrate site.

This sequence belongs to the RuBisCO large chain family. Type I subfamily. As to quaternary structure, heterohexadecamer of 8 large chains and 8 small chains; disulfide-linked. The disulfide link is formed within the large subunit homodimers. Mg(2+) is required as a cofactor. The disulfide bond which can form in the large chain dimeric partners within the hexadecamer appears to be associated with oxidative stress and protein turnover.

It is found in the plastid. The protein localises to the chloroplast. The catalysed reaction is 2 (2R)-3-phosphoglycerate + 2 H(+) = D-ribulose 1,5-bisphosphate + CO2 + H2O. It carries out the reaction D-ribulose 1,5-bisphosphate + O2 = 2-phosphoglycolate + (2R)-3-phosphoglycerate + 2 H(+). In terms of biological role, ruBisCO catalyzes two reactions: the carboxylation of D-ribulose 1,5-bisphosphate, the primary event in carbon dioxide fixation, as well as the oxidative fragmentation of the pentose substrate in the photorespiration process. Both reactions occur simultaneously and in competition at the same active site. This chain is Ribulose bisphosphate carboxylase large chain, found in Anemia mexicana (Mexican fern).